Consider the following 411-residue polypeptide: Arginine deiminase (411 aa).

Cys-401 functions as the Amidino-cysteine intermediate in the catalytic mechanism.

The protein belongs to the arginine deiminase family.

The protein resides in the cytoplasm. It catalyses the reaction L-arginine + H2O = L-citrulline + NH4(+). It functions in the pathway amino-acid degradation; L-arginine degradation via ADI pathway; carbamoyl phosphate from L-arginine: step 1/2. The chain is Arginine deiminase from Streptococcus pyogenes serotype M2 (strain MGAS10270).